The primary structure comprises 236 residues: tRNA1(Val) (adenine(37)-N6)-methyltransferase (236 aa).

It belongs to the methyltransferase superfamily. tRNA (adenine-N(6)-)-methyltransferase family.

The protein localises to the cytoplasm. It catalyses the reaction adenosine(37) in tRNA1(Val) + S-adenosyl-L-methionine = N(6)-methyladenosine(37) in tRNA1(Val) + S-adenosyl-L-homocysteine + H(+). Functionally, specifically methylates the adenine in position 37 of tRNA(1)(Val) (anticodon cmo5UAC). The polypeptide is tRNA1(Val) (adenine(37)-N6)-methyltransferase (Histophilus somni (strain 2336) (Haemophilus somnus)).